The sequence spans 192 residues: Pyridoxal 5'-phosphate synthase subunit PdxT (192 aa).

Residue 46-48 participates in L-glutamine binding; sequence GES. The active-site Nucleophile is the cysteine 77. Residues arginine 103 and 131–132 contribute to the L-glutamine site; that span reads IR. Residues histidine 167 and glutamate 169 each act as charge relay system in the active site.

Belongs to the glutaminase PdxT/SNO family. In terms of assembly, in the presence of PdxS, forms a dodecamer of heterodimers. Only shows activity in the heterodimer.

The enzyme catalyses aldehydo-D-ribose 5-phosphate + D-glyceraldehyde 3-phosphate + L-glutamine = pyridoxal 5'-phosphate + L-glutamate + phosphate + 3 H2O + H(+). It catalyses the reaction L-glutamine + H2O = L-glutamate + NH4(+). Its pathway is cofactor biosynthesis; pyridoxal 5'-phosphate biosynthesis. Its function is as follows. Catalyzes the hydrolysis of glutamine to glutamate and ammonia as part of the biosynthesis of pyridoxal 5'-phosphate. The resulting ammonia molecule is channeled to the active site of PdxS. The protein is Pyridoxal 5'-phosphate synthase subunit PdxT of Exiguobacterium sibiricum (strain DSM 17290 / CCUG 55495 / CIP 109462 / JCM 13490 / 255-15).